The chain runs to 133 residues: Phosphoribosyl-AMP cyclohydrolase (133 aa).

Asp-82 serves as a coordination point for Mg(2+). Cys-83 is a Zn(2+) binding site. The Mg(2+) site is built by Asp-84 and Asp-86. Zn(2+) contacts are provided by Cys-99 and Cys-106.

Belongs to the PRA-CH family. As to quaternary structure, homodimer. It depends on Mg(2+) as a cofactor. Requires Zn(2+) as cofactor.

The protein resides in the cytoplasm. The enzyme catalyses 1-(5-phospho-beta-D-ribosyl)-5'-AMP + H2O = 1-(5-phospho-beta-D-ribosyl)-5-[(5-phospho-beta-D-ribosylamino)methylideneamino]imidazole-4-carboxamide. The protein operates within amino-acid biosynthesis; L-histidine biosynthesis; L-histidine from 5-phospho-alpha-D-ribose 1-diphosphate: step 3/9. In terms of biological role, catalyzes the hydrolysis of the adenine ring of phosphoribosyl-AMP. In Rhodospirillum centenum (strain ATCC 51521 / SW), this protein is Phosphoribosyl-AMP cyclohydrolase.